The chain runs to 195 residues: Adenylate kinase (195 aa).

Position 10 to 15 (10 to 15) interacts with ATP; sequence GSGKGT. The NMP stretch occupies residues 30-59; that stretch reads STGDILRAERAAGTLLGQQAQSYMDRGELV. AMP is bound by residues Thr31, Arg36, 57-59, 85-88, and Gln92; these read ELV and GFPR. Residues 126–140 form an LID region; sequence NRAKQAVNGQQRSDD. An ATP-binding site is contributed by Arg127. Positions 137 and 148 each coordinate AMP. Arg176 is an ATP binding site.

It belongs to the adenylate kinase family. Monomer.

The protein localises to the cytoplasm. It catalyses the reaction AMP + ATP = 2 ADP. It functions in the pathway purine metabolism; AMP biosynthesis via salvage pathway; AMP from ADP: step 1/1. Functionally, catalyzes the reversible transfer of the terminal phosphate group between ATP and AMP. Plays an important role in cellular energy homeostasis and in adenine nucleotide metabolism. The chain is Adenylate kinase from Thermosynechococcus vestitus (strain NIES-2133 / IAM M-273 / BP-1).